The following is a 953-amino-acid chain: ALS2 C-terminal-like protein (953 aa).

MORN repeat units lie at residues Tyr-358 to Asn-380, His-381 to Glu-403, Tyr-409 to Val-431, Tyr-432 to Gln-452, Tyr-459 to Arg-479, Tyr-483 to Cys-505, Tyr-506 to Leu-528, and Tyr-529 to Thr-552. The 147-residue stretch at Leu-796–Arg-942 folds into the VPS9 domain.

Homodimer. Forms a heteromeric complex with ALS2. Interacts with ALS2 and RAB5A. As to expression, expressed in heart and kidney.

It is found in the cytoplasm. Its function is as follows. Acts as a guanine nucleotide exchange factor (GEF) for Rab5 GTPase. Regulates the ALS2-mediated endosome dynamics. This chain is ALS2 C-terminal-like protein (ALS2CL), found in Homo sapiens (Human).